The chain runs to 313 residues: Caffeic acid 3-O-methyltransferase (313 aa).

Ile-112–Phe-118 serves as a coordination point for substrate. A substrate binding region spans residues Ala-144–Met-162. S-adenosyl-L-methionine-binding residues include Gly-190, Asp-213, Asp-233, Met-234, and Lys-247. His-251 acts as the Proton acceptor in catalysis.

Belongs to the class I-like SAM-binding methyltransferase superfamily. Cation-independent O-methyltransferase family. COMT subfamily. Homodimer.

The enzyme catalyses (E)-caffeate + S-adenosyl-L-methionine = (E)-ferulate + S-adenosyl-L-homocysteine + H(+). It participates in aromatic compound metabolism; phenylpropanoid biosynthesis. Its function is as follows. Catalyzes the conversion of caffeic acid to ferulic acid and of 5-hydroxyferulic acid to sinapic acid. The resulting products may subsequently be converted to the corresponding alcohols that are incorporated into lignins. The chain is Caffeic acid 3-O-methyltransferase (COMT1) from Eucalyptus globulus (Tasmanian blue gum).